A 325-amino-acid chain; its full sequence is UPF0285 protein MmarC5_0962 (325 aa).

It belongs to the UPF0285 family.

In Methanococcus maripaludis (strain C5 / ATCC BAA-1333), this protein is UPF0285 protein MmarC5_0962.